The sequence spans 387 residues: ATP-dependent Clp protease proteolytic subunit-related protein 1, chloroplastic (387 aa).

The N-terminal 41 residues, 1–41 (MATALVSPLTSQLNHEAVCSKFVLPKSPFMSGSKLFSSNMP), are a transit peptide targeting the chloroplast. Over residues 355–365 (QDSSFEKRDYD) the composition is skewed to basic and acidic residues. Residues 355 to 387 (QDSSFEKRDYDGTLAQRAMRPGGGSPAAPAGLR) are disordered.

It belongs to the peptidase S14 family. Component of the chloroplastic Clp protease core complex which consist of at least 16 proteins: CLPP4 (3 copies), CLPP5 (3 copies), CLPR4 (2 copies), ClpP1 (1 copy), CLPP6 (1 copy), CLPR2 (1 copy), CLPT1 (1 copy), CLPT2 (1 copy) and 3 copies of CLPP3 and/or CLPR1 and/or CLPR3. The core complex is organized in two heptameric rings, one containing CLPP3,4,5,6 in a 1:2:3:1 ratio and the other CLPP1 and CLPR1,2,3,4 in a 3:1:1:1:1 ratio.

The protein resides in the plastid. The protein localises to the chloroplast stroma. Its function is as follows. Required for chloroplast development and differentiation. The sequence is that of ATP-dependent Clp protease proteolytic subunit-related protein 1, chloroplastic from Arabidopsis thaliana (Mouse-ear cress).